The primary structure comprises 198 residues: Endothelin-3 (198 aa).

The N-terminal stretch at 1-16 (MEPGLWLLFGLTVTSA) is a signal peptide. Residues 17–86 (AGLVPCPQPG…SKGGPVHGRA (70 aa)) constitute a propeptide that is removed on maturation. Residues 22-79 (CPQPGDAGKSGVPGTPPTARSEGDIQEPVAMTAVQGPSPRSPEQEQELGRFGEQASKG) form a disordered region. Cystine bridges form between cysteine 89–cysteine 103 and cysteine 91–cysteine 99. Residues 110–198 (INTPEQTVPY…RGNGGLRPTR (89 aa)) constitute a propeptide that is removed on maturation. Residues 150 to 164 (CACVQSQDSACLHFC) form an endothelin-like region. The tract at residues 174–198 (SRTATNPDKEEEPASRGNGGLRPTR) is disordered.

This sequence belongs to the endothelin/sarafotoxin family. As to expression, expressed in which included heart, lung, liver, kidney, spleen, stomach, pancreas, duodenum, colon, uterus, ovary and testis.

The protein localises to the secreted. In terms of biological role, endothelins are endothelium-derived vasoconstrictor peptides. This Canis lupus familiaris (Dog) protein is Endothelin-3 (EDN3).